A 615-amino-acid chain; its full sequence is uncharacterized protein (615 aa).

This sequence belongs to the NodU/CmcH family.

This is an uncharacterized protein from Synechocystis sp. (strain ATCC 27184 / PCC 6803 / Kazusa).